Here is a 118-residue protein sequence, read N- to C-terminus: Immunoglobulin heavy variable 4-31 (118 aa).

The signal sequence occupies residues 1-19; the sequence is MKHLWFFLLLVAAPRWVLS. The tract at residues 20-44 is framework-1; sequence QVQLQESGPGLVKPSQTLSLTCTVS. Residues 20–118 form the Ig-like domain; sequence QVQLQESGPG…ADTAVYYCAR (99 aa). A disulfide bond links Cys41 and Cys116. Residues 45 to 54 form a complementarity-determining-1 region; sequence GGSISSGGYY. The segment at 55 to 71 is framework-2; the sequence is WSWIRQHPGKGLEWIGY. The interval 72-78 is complementarity-determining-2; sequence IYYSGST. The interval 79–116 is framework-3; the sequence is YYNPSLKSLVTISVDTSKNQFSLKLSSVTAADTAVYYC. Residues 117–118 are complementarity-determining-3; it reads AR.

As to quaternary structure, immunoglobulins are composed of two identical heavy chains and two identical light chains; disulfide-linked.

The protein resides in the secreted. It localises to the cell membrane. Its function is as follows. V region of the variable domain of immunoglobulin heavy chains that participates in the antigen recognition. Immunoglobulins, also known as antibodies, are membrane-bound or secreted glycoproteins produced by B lymphocytes. In the recognition phase of humoral immunity, the membrane-bound immunoglobulins serve as receptors which, upon binding of a specific antigen, trigger the clonal expansion and differentiation of B lymphocytes into immunoglobulins-secreting plasma cells. Secreted immunoglobulins mediate the effector phase of humoral immunity, which results in the elimination of bound antigens. The antigen binding site is formed by the variable domain of one heavy chain, together with that of its associated light chain. Thus, each immunoglobulin has two antigen binding sites with remarkable affinity for a particular antigen. The variable domains are assembled by a process called V-(D)-J rearrangement and can then be subjected to somatic hypermutations which, after exposure to antigen and selection, allow affinity maturation for a particular antigen. The polypeptide is Immunoglobulin heavy variable 4-31 (Homo sapiens (Human)).